A 217-amino-acid chain; its full sequence is E3 ubiquitin-protein ligase znrf2 (217 aa).

Disordered stretches follow at residues 1–27 (MGAKQSSPAANGRTRAYSGSDLPSATA) and 63–111 (QFIS…ERST). A lipid anchor (N-myristoyl glycine) is attached at G2. Polar residues predominate over residues 68–100 (RTRSVGPSARPQSGINIPNSGAYSSADSGNSTP). Residues 174 to 215 (CAICLEELLQGDTIARLPCLCIYHKGCIDEWFEVNRSCPEHP) form an RING-type; atypical zinc finger.

Its subcellular location is the endosome membrane. It localises to the lysosome membrane. The protein localises to the presynaptic cell membrane. The catalysed reaction is S-ubiquitinyl-[E2 ubiquitin-conjugating enzyme]-L-cysteine + [acceptor protein]-L-lysine = [E2 ubiquitin-conjugating enzyme]-L-cysteine + N(6)-ubiquitinyl-[acceptor protein]-L-lysine.. It functions in the pathway protein modification; protein ubiquitination. Its function is as follows. May play a role in the establishment and maintenance of neuronal transmission and plasticity via its ubiquitin ligase activity. E3 ubiquitin ligases accept ubiquitin from an E2 ubiquitin-conjugating enzyme in the form of a thioester and then directly transfer the ubiquitin to targeted substrates. The protein is E3 ubiquitin-protein ligase znrf2 (znrf2) of Danio rerio (Zebrafish).